Here is a 262-residue protein sequence, read N- to C-terminus: MNKFLIIDGLNLVRRIYAAIPDETDMQSLTERVSSACTKLLRVHRPSHVAIVWDGDEISWRKQLYPDYKKGRKPMPEPLAQGLVALQDHLTAMHIGSIYAAAEADDVIATLAIKTAKAQGEAIIVSTDKGFSQLNHRHISQWDHFNQQYLDIAALEQKLGVERSQFLDLMALAGDSGNKIPGIAGIGPKSAAELLKTFRSLPTLFSSLSNLGAKQAKKLAEGKEMARLSYKLAQLQTDLPLNINLKDFRVIDSQPEKTINQD.

Mg(2+) is bound at residue Asp-105. Positions 162–259 (ERSQFLDLMA…VIDSQPEKTI (98 aa)) constitute a 5'-3' exonuclease domain. K(+)-binding residues include Leu-172, Ala-173, Pro-181, Ile-183, and Ile-186. The interval 185 to 190 (GIGPKS) is interaction with DNA.

The protein belongs to the Xni family. Requires Mg(2+) as cofactor. K(+) is required as a cofactor.

Functionally, has flap endonuclease activity. During DNA replication, flap endonucleases cleave the 5'-overhanging flap structure that is generated by displacement synthesis when DNA polymerase encounters the 5'-end of a downstream Okazaki fragment. In Shewanella baltica (strain OS185), this protein is Flap endonuclease Xni.